Reading from the N-terminus, the 231-residue chain is Flagellar L-ring protein (231 aa).

Positions 1–18 (MNRLLSVFALGGAVLLAG) are cleaved as a signal peptide. A lipid anchor (N-palmitoyl cysteine) is attached at C19. Residue C19 is the site of S-diacylglycerol cysteine attachment.

Belongs to the FlgH family. In terms of assembly, the basal body constitutes a major portion of the flagellar organelle and consists of four rings (L,P,S, and M) mounted on a central rod.

Its subcellular location is the cell outer membrane. It is found in the bacterial flagellum basal body. Assembles around the rod to form the L-ring and probably protects the motor/basal body from shearing forces during rotation. The sequence is that of Flagellar L-ring protein from Pseudomonas putida (strain GB-1).